A 308-amino-acid chain; its full sequence is Pantothenate kinase (308 aa).

93-100 (GSVAVGKS) contributes to the ATP binding site.

Belongs to the prokaryotic pantothenate kinase family.

The protein localises to the cytoplasm. It catalyses the reaction (R)-pantothenate + ATP = (R)-4'-phosphopantothenate + ADP + H(+). It participates in cofactor biosynthesis; coenzyme A biosynthesis; CoA from (R)-pantothenate: step 1/5. In Corynebacterium aurimucosum (strain ATCC 700975 / DSM 44827 / CIP 107346 / CN-1) (Corynebacterium nigricans), this protein is Pantothenate kinase.